A 233-amino-acid polypeptide reads, in one-letter code: Ras-related protein RabV (233 aa).

A GTP-binding site is contributed by 15–22; sequence GEKEVGKS. The short motif at 37–45 is the Effector region element; it reads YIPTIGIDF. GTP-binding positions include 63 to 67 and 122 to 125; these read DYVSH and TKSD. The interval 143–182 is disordered; that stretch reads QNNNNNNNNNNNNNNNNNNNNNNNNNNNNNSNNNNNNNLQ. Residues 144–180 show a composition bias toward low complexity; the sequence is NNNNNNNNNNNNNNNNNNNNNNNNNNNNNSNNNNNNN.

It belongs to the small GTPase superfamily. Rab family.

This is Ras-related protein RabV (rabV) from Dictyostelium discoideum (Social amoeba).